Reading from the N-terminus, the 443-residue chain is Ribulose bisphosphate carboxylase large chain (443 aa).

K7 is modified (N6,N6,N6-trimethyllysine). Substrate contacts are provided by N116 and T166. The active-site Proton acceptor is K168. Residue K170 coordinates substrate. Residues K194, D196, and E197 each coordinate Mg(2+). The residue at position 194 (K194) is an N6-carboxylysine. H287 acts as the Proton acceptor in catalysis. Substrate contacts are provided by R288, H320, and S372.

This sequence belongs to the RuBisCO large chain family. Type I subfamily. In terms of assembly, heterohexadecamer of 8 large chains and 8 small chains; disulfide-linked. The disulfide link is formed within the large subunit homodimers. The cofactor is Mg(2+). Post-translationally, the disulfide bond which can form in the large chain dimeric partners within the hexadecamer appears to be associated with oxidative stress and protein turnover.

It localises to the plastid. Its subcellular location is the chloroplast. It catalyses the reaction 2 (2R)-3-phosphoglycerate + 2 H(+) = D-ribulose 1,5-bisphosphate + CO2 + H2O. The catalysed reaction is D-ribulose 1,5-bisphosphate + O2 = 2-phosphoglycolate + (2R)-3-phosphoglycerate + 2 H(+). Functionally, ruBisCO catalyzes two reactions: the carboxylation of D-ribulose 1,5-bisphosphate, the primary event in carbon dioxide fixation, as well as the oxidative fragmentation of the pentose substrate in the photorespiration process. Both reactions occur simultaneously and in competition at the same active site. This Abies homolepis (Nikko fir) protein is Ribulose bisphosphate carboxylase large chain.